Reading from the N-terminus, the 333-residue chain is MTARASQDSAALPLDKETLLTVYRKMRTIRDFEERLHVDFGRGDIPGFVHLYAGEEAAGVGILHHLNDGDRIASTHRGHGHCIAKGVDPVAMMKEIYGKKGGSCNGKGGSMHIADLSKGMMGANGILGAGAPLICGAALAAKFRGKGEVGITFCGDGASNQGTFLESLNLAAVWNLPVIFVIENNGYAESTSRDYGTAVDSYVDRAAGFGIPGVTVDGTDFFAVHEAAGEVIRRAREGGGPSLLECKMVRFYGHFEGDAQTYRAAGELDDIRANKDCLKLFGRAVTQAGVVAREELDTIDREVAALIEHAVQEAKAAPQPGPEDLLTDVYVSY.

Tetramer of 2 alpha and 2 beta subunits. Thiamine diphosphate serves as cofactor.

It functions in the pathway ketone degradation; acetoin degradation. Catalyzes the 2,6-dichlorophenolindophenol-dependent cleavage of acetoin into acetate and acetaldehyde, in vitro. The alpha subunit is probably the catalytic subunit of the enzyme. This chain is Acetoin:2,6-dichlorophenolindophenol oxidoreductase subunit alpha (acoA), found in Cupriavidus necator (strain ATCC 17699 / DSM 428 / KCTC 22496 / NCIMB 10442 / H16 / Stanier 337) (Ralstonia eutropha).